The chain runs to 155 residues: SsrA-binding protein (155 aa).

It belongs to the SmpB family.

It localises to the cytoplasm. Its function is as follows. Required for rescue of stalled ribosomes mediated by trans-translation. Binds to transfer-messenger RNA (tmRNA), required for stable association of tmRNA with ribosomes. tmRNA and SmpB together mimic tRNA shape, replacing the anticodon stem-loop with SmpB. tmRNA is encoded by the ssrA gene; the 2 termini fold to resemble tRNA(Ala) and it encodes a 'tag peptide', a short internal open reading frame. During trans-translation Ala-aminoacylated tmRNA acts like a tRNA, entering the A-site of stalled ribosomes, displacing the stalled mRNA. The ribosome then switches to translate the ORF on the tmRNA; the nascent peptide is terminated with the 'tag peptide' encoded by the tmRNA and targeted for degradation. The ribosome is freed to recommence translation, which seems to be the essential function of trans-translation. In Streptococcus pneumoniae (strain Hungary19A-6), this protein is SsrA-binding protein.